We begin with the raw amino-acid sequence, 327 residues long: GMP reductase (327 aa).

Cys-175 acts as the Thioimidate intermediate in catalysis. 204–227 is a binding site for NADP(+); the sequence is IIADGGIRTHGDIAKSVRFGASMV.

It belongs to the IMPDH/GMPR family. GuaC type 2 subfamily.

The enzyme catalyses IMP + NH4(+) + NADP(+) = GMP + NADPH + 2 H(+). Functionally, catalyzes the irreversible NADPH-dependent deamination of GMP to IMP. It functions in the conversion of nucleobase, nucleoside and nucleotide derivatives of G to A nucleotides, and in maintaining the intracellular balance of A and G nucleotides. In Lysinibacillus sphaericus (strain C3-41), this protein is GMP reductase.